The following is a 192-amino-acid chain: Thiol-disulfide oxidoreductase ResA (192 aa).

A helical; Signal-anchor for type II membrane protein membrane pass occupies residues 22–41 (SSILLILVAAVVFAIVSNMK). The Thioredoxin domain maps to 47 to 189 (YRVGDAAPDF…LEGYLNDIAP (143 aa)). A disulfide bridge connects residues Cys-89 and Cys-92.

This sequence belongs to the thioredoxin family. ResA subfamily.

Its subcellular location is the cell membrane. It participates in protein modification; cytochrome c assembly. In terms of biological role, thiol-disulfide oxidoreductase which is required in disulfide reduction during c-type cytochrome synthesis. May accept reducing equivalents from CcdA, leading to breakage of disulfide bonds in apocytochrome c; following this reduction heme can be covalently attached. This chain is Thiol-disulfide oxidoreductase ResA, found in Oceanobacillus iheyensis (strain DSM 14371 / CIP 107618 / JCM 11309 / KCTC 3954 / HTE831).